Reading from the N-terminus, the 254-residue chain is Alcohol dehydrogenase (254 aa).

10 to 33 (FVAGLGGIGLETSREIVKSGPKNL) is an NAD(+) binding site. Ser138 serves as a coordination point for substrate. The active-site Proton acceptor is the Tyr151.

It belongs to the short-chain dehydrogenases/reductases (SDR) family. Homodimer.

The enzyme catalyses a primary alcohol + NAD(+) = an aldehyde + NADH + H(+). The catalysed reaction is a secondary alcohol + NAD(+) = a ketone + NADH + H(+). The protein is Alcohol dehydrogenase (Adh) of Scaptomyza crassifemur (Fruit fly).